Consider the following 1297-residue polypeptide: Protein ENHANCED DOWNY MILDEW 2 (1297 aa).

The PHD-type 1; degenerate zinc finger occupies 222–281 (ESVCAICDNGGEILCCEGSCLRSFHATKKDGEDSLCDSLGFNKMQVEAIQKYFCPNCEHK). Residues Cys-237, Cys-241, Cys-275, Cys-278, Cys-285, Cys-288, Cys-306, Cys-311, His-316, Cys-319, Cys-346, and His-349 each coordinate Zn(2+). Residues 282–352 (IHQCFICKNL…EYTCPLHKCS (71 aa)) form a PHD-type 2; atypical zinc finger. A PHD-type 3; degenerate zinc finger spans residues 351 to 417 (CSVCENGEVK…RVLIYCQEHE (67 aa)). A Nuclear localization signal 1 motif is present at residues 445–452 (QRRILESH). Disordered regions lie at residues 471 to 547 (CGKA…ARDA) and 562 to 598 (TQEP…IPTL). Residues 475–487 (SKNSFRSSFPSSK) are compositionally biased toward low complexity. A Nuclear localization signal 2 motif is present at residues 492–499 (TKKHGLVS). Residues 526 to 547 (KMMEDSREAGKNKLGVKEARDA) are compositionally biased toward basic and acidic residues. Short sequence motifs (nuclear localization signal) lie at residues 610-617 (MKKATEEI) and 979-986 (LKKEGKTK). 2 stretches are compositionally biased toward basic and acidic residues: residues 969 to 990 (QSDH…DYSG) and 1096 to 1109 (EVSR…RTSR). 3 disordered regions span residues 969–1017 (QSDH…GELS), 1085–1109 (HGCK…RTSR), and 1260–1297 (FPLP…WIND).

As to quaternary structure, interacts with WNK8 in nucleus; this interaction is involved in developmental processes regulation but not in RPP7-dependent disease resistance. Interacts with EML1 and EML2 in nucleus. Component of the ASI1-AIPP1-EDM2 (AAE) RNA regulatory complex composed of at least AIPP1/EDM3, ASI1 and EDM2 and may contain CPL2, AIPP2 and AIPP3/BDT1. Binds directly to AIPP1/EDM3. Co-associates with AIPP1/EDM3 to histone H3 lysine 9 dimethylation (H3K9me2)-marked chromatin and transcripts at a critical proximal polyadenylation site of RPP7 to hamper proximal transcript polyadeylation/termination. Post-translationally, phosphorylated by WNK8.

The protein localises to the nucleus. Functionally, cellular antisilencing factor and regulator of genome DNA methylation patterns involved in the regulation of chromatin states. Together with SUVH4, monitors repressive epigenetic marks H3K27me1, H3K9me2, and prevents DNA-methylation at CHG sites, affecting especially the expression of transposons and developmentally important genes. Collaboratively with ASI1 and AIPP1/EDM3, the AAE complex regulates alternative RNA processing (e.g. alternative splicing) and epigenetic silencing (e.g. H3K9me2) of intronic heterochromatin-containing genes as well as genic heterochromatin-containing genes by promoting distal 3' polyadenylation. Epigenetic reader that binds DNA and contributes to transcriptional transposable element (TE) silencing by modulating levels of the repressive post-translational histone modifications (PHM) H3K9me2. In cv. Columbia, required for RPP7-dependent disease resistance against the Hyaloperonospora arabidopsidis isolate Hiks1, by promoting levels of RPP7 via alternative polyadenylation (APA), resulting from cooption of epigenetic information at the TE insertion locus COPIA-R7. Exhibits a global role in NLR (nucleotide-binding, leucine-rich repeat) defense genes epigenetic (e.g. H3K9me2 hallmarks) expression control; promotes the accumulation of RPP7, RPP4 and some other proteins, but mediates the repression of several other NLR products, probably to compensate for fitness penalties caused by defense mechanisms. Regulates development processes such as the formation of leaf pavement cells, leaf expansion, fertility and flowering. Prevents FLC accumulation to control flowering. Modulates stomatal development by regulating the methylation-mediated silencing of ERECTA receptor genes (e.g. ER, ERL1 and ERL2) and preventing cell divisions. The sequence is that of Protein ENHANCED DOWNY MILDEW 2 from Arabidopsis thaliana (Mouse-ear cress).